The sequence spans 368 residues: Alanine racemase (368 aa).

Residue K40 is the Proton acceptor; specific for D-alanine of the active site. K40 carries the N6-(pyridoxal phosphate)lysine modification. Residue R136 coordinates substrate. Residue Y263 is the Proton acceptor; specific for L-alanine of the active site. Substrate is bound at residue M310.

It belongs to the alanine racemase family. The cofactor is pyridoxal 5'-phosphate.

The catalysed reaction is L-alanine = D-alanine. It participates in amino-acid biosynthesis; D-alanine biosynthesis; D-alanine from L-alanine: step 1/1. In terms of biological role, catalyzes the interconversion of L-alanine and D-alanine. May also act on other amino acids. The chain is Alanine racemase (alr) from Streptococcus uberis (strain ATCC BAA-854 / 0140J).